The chain runs to 302 residues: MLAWRVARGAWGSLRVAVRPPGARLGRGGSRRALLPPAACCLGCLAERWRLRPAAFALRLPGTSPRTHCSGAGKAAPEPAAGGDAAAQAPSARWVRASATSSYENPWTIPNLLSMTRIGLAPVLGYLILEEDFNVALGVFALAGLTDLLDGFIARNWANQKSALGSALDPLADKVLISILYISLTYADLIPVPLTYMIISRDVMLIAAVFYVRYRTLPTPRTLAKYFNPCYATARLKPTFISKVNTAVQLILVAASLAAPVFNYADSIYLQILWCCTAFTTAASAYSYYHYGRKTVQVIKGK.

A disordered region spans residues 65–84 (PRTHCSGAGKAAPEPAAGGD). Residues 71 to 84 (GAGKAAPEPAAGGD) show a composition bias toward low complexity. The next 5 helical transmembrane spans lie at 109–129 (IPNL…YLIL), 133–153 (FNVA…DGFI), 190–212 (IPVP…VFYV), 250–270 (LILV…SIYL), and 271–289 (QILW…YSYY).

It belongs to the CDP-alcohol phosphatidyltransferase class-I family. It depends on a divalent metal cation as a cofactor.

The protein resides in the mitochondrion inner membrane. It catalyses the reaction a CDP-1,2-diacyl-sn-glycerol + a 1,2-diacyl-sn-glycero-3-phospho-(1'-sn-glycerol) = a cardiolipin + CMP + H(+). Its function is as follows. Catalyzes the synthesis of cardiolipin (CL) (diphosphatidylglycerol) by specifically transferring a phosphatidyl group from CDP-diacylglycerol to phosphatidylglycerol (PG). CL is a key phospholipid in mitochondrial membranes and plays important roles in maintaining the functional integrity and dynamics of mitochondria under both optimal and stress conditions. This chain is Cardiolipin synthase (CMP-forming) (Crls1), found in Rattus norvegicus (Rat).